The following is a 225-amino-acid chain: MTTAAIIVAAGRGTRAGGDLPKQWQPLAGRPVLAHTLAAFRAAAGVSRTLLVIHPDDRARAEALPGVAEGKVELVEGGASRDASVRNALEALAGAGIERVLIHDGARPLVAPGLIARTLAALESAPGAAPAVPVSDALWRGEGGRVVGTQDRTGLFRAQTPQAFRYEAILAAHRAHPGGAADDVEVARAAGLEVAIVEGCEDNLKVTYPGDFARAERLLALAAGL.

This sequence belongs to the IspD/TarI cytidylyltransferase family. IspD subfamily.

It carries out the reaction 2-C-methyl-D-erythritol 4-phosphate + CTP + H(+) = 4-CDP-2-C-methyl-D-erythritol + diphosphate. It participates in isoprenoid biosynthesis; isopentenyl diphosphate biosynthesis via DXP pathway; isopentenyl diphosphate from 1-deoxy-D-xylulose 5-phosphate: step 2/6. Its function is as follows. Catalyzes the formation of 4-diphosphocytidyl-2-C-methyl-D-erythritol from CTP and 2-C-methyl-D-erythritol 4-phosphate (MEP). The sequence is that of 2-C-methyl-D-erythritol 4-phosphate cytidylyltransferase from Cereibacter sphaeroides (strain KD131 / KCTC 12085) (Rhodobacter sphaeroides).